Consider the following 714-residue polypeptide: Methylmalonyl-CoA mutase (714 aa).

The 131-residue stretch at 584-714 (RPRILIAKMG…VLNLISQHHD (131 aa)) folds into the B12-binding domain. Residue H597 coordinates adenosylcob(III)alamin.

The protein belongs to the methylmalonyl-CoA mutase family. In terms of assembly, homodimer. Interacts with ArgK. Requires adenosylcob(III)alamin as cofactor.

It catalyses the reaction (R)-methylmalonyl-CoA = succinyl-CoA. Its function is as follows. Catalyzes the interconversion of succinyl-CoA and methylmalonyl-CoA. Could be part of a pathway that converts succinate to propionate. In Escherichia coli (strain K12), this protein is Methylmalonyl-CoA mutase (scpA).